Here is a 1047-residue protein sequence, read N- to C-terminus: Carbamoyl phosphate synthase large chain (1047 aa).

A carboxyphosphate synthetic domain region spans residues 1 to 398; that stretch reads MPRRDDIHRI…ALMKAIASLD (398 aa). ATP-binding residues include R129, R169, G175, G176, E208, L210, E215, G241, V242, H243, Q284, and E296. The region spanning 133–325 is the ATP-grasp 1 domain; the sequence is YEFLKAMGEP…IARIAAKIAA (193 aa). Residues Q284, E296, and N298 each contribute to the Mg(2+) site. Residues Q284, E296, and N298 each contribute to the Mn(2+) site. The tract at residues 399-539 is oligomerization domain; that stretch reads NAFSSNIRLH…YSTYEDEDET (141 aa). A carbamoyl phosphate synthetic domain region spans residues 540–916; sequence PDLSGSIMII…ALRKSLQRSI (377 aa). The ATP-grasp 2 domain occupies 665-854; the sequence is SRVIEGLGIK…WVRLAVECMI (190 aa). Residues R701, K738, L740, E745, G770, V771, H772, S773, Q813, and E825 each contribute to the ATP site. Mg(2+) contacts are provided by Q813, E825, and N827. Mn(2+)-binding residues include Q813, E825, and N827. The 138-residue stretch at 910–1047 folds into the MGS-like domain; the sequence is KSLQRSISSV…REIGDYLQVS (138 aa). The tract at residues 916-1047 is allosteric domain; it reads ISSVLITVRD…REIGDYLQVS (132 aa).

Belongs to the CarB family. In terms of assembly, composed of two chains; the small (or glutamine) chain promotes the hydrolysis of glutamine to ammonia, which is used by the large (or ammonia) chain to synthesize carbamoyl phosphate. Tetramer of heterodimers (alpha,beta)4. Requires Mg(2+) as cofactor. The cofactor is Mn(2+).

It catalyses the reaction hydrogencarbonate + L-glutamine + 2 ATP + H2O = carbamoyl phosphate + L-glutamate + 2 ADP + phosphate + 2 H(+). The enzyme catalyses hydrogencarbonate + NH4(+) + 2 ATP = carbamoyl phosphate + 2 ADP + phosphate + 2 H(+). It functions in the pathway amino-acid biosynthesis; L-arginine biosynthesis; carbamoyl phosphate from bicarbonate: step 1/1. Its pathway is pyrimidine metabolism; UMP biosynthesis via de novo pathway; (S)-dihydroorotate from bicarbonate: step 1/3. Large subunit of the glutamine-dependent carbamoyl phosphate synthetase (CPSase). CPSase catalyzes the formation of carbamoyl phosphate from the ammonia moiety of glutamine, carbonate, and phosphate donated by ATP, constituting the first step of 2 biosynthetic pathways, one leading to arginine and/or urea and the other to pyrimidine nucleotides. The large subunit (synthetase) binds the substrates ammonia (free or transferred from glutamine from the small subunit), hydrogencarbonate and ATP and carries out an ATP-coupled ligase reaction, activating hydrogencarbonate by forming carboxy phosphate which reacts with ammonia to form carbamoyl phosphate. This chain is Carbamoyl phosphate synthase large chain, found in Thermoplasma acidophilum (strain ATCC 25905 / DSM 1728 / JCM 9062 / NBRC 15155 / AMRC-C165).